The sequence spans 344 residues: Dihydroorotate dehydrogenase (quinone) (344 aa).

Residues 64–68 and Thr-88 contribute to the FMN site; that span reads AGLDK. Position 68 (Lys-68) interacts with substrate. 113–117 is a substrate binding site; sequence NRMGF. FMN contacts are provided by Asn-144 and Asn-177. Position 177 (Asn-177) interacts with substrate. Ser-180 serves as the catalytic Nucleophile. Asn-182 contributes to the substrate binding site. FMN-binding residues include Lys-222 and Thr-250. 251–252 contacts substrate; it reads NT. FMN-binding positions include Gly-273, Gly-302, and 323 to 324; that span reads YS.

Belongs to the dihydroorotate dehydrogenase family. Type 2 subfamily. Monomer. Requires FMN as cofactor.

The protein localises to the cell membrane. The enzyme catalyses (S)-dihydroorotate + a quinone = orotate + a quinol. It participates in pyrimidine metabolism; UMP biosynthesis via de novo pathway; orotate from (S)-dihydroorotate (quinone route): step 1/1. Functionally, catalyzes the conversion of dihydroorotate to orotate with quinone as electron acceptor. The sequence is that of Dihydroorotate dehydrogenase (quinone) from Polynucleobacter necessarius subsp. necessarius (strain STIR1).